A 309-amino-acid polypeptide reads, in one-letter code: Ornithine carbamoyltransferase (309 aa).

Carbamoyl phosphate contacts are provided by residues 51–54 (STRT), glutamine 78, arginine 102, and 129–132 (HPVQ). L-ornithine-binding positions include asparagine 160, aspartate 224, and 228 to 229 (SM). Residues 264–265 (CL) and arginine 292 contribute to the carbamoyl phosphate site.

Belongs to the aspartate/ornithine carbamoyltransferase superfamily. OTCase family.

It localises to the cytoplasm. The catalysed reaction is carbamoyl phosphate + L-ornithine = L-citrulline + phosphate + H(+). It functions in the pathway amino-acid biosynthesis; L-arginine biosynthesis; L-arginine from L-ornithine and carbamoyl phosphate: step 1/3. Reversibly catalyzes the transfer of the carbamoyl group from carbamoyl phosphate (CP) to the N(epsilon) atom of ornithine (ORN) to produce L-citrulline. The chain is Ornithine carbamoyltransferase from Campylobacter fetus subsp. fetus (strain 82-40).